A 221-amino-acid chain; its full sequence is Translation initiation factor 6 (221 aa).

Belongs to the eIF-6 family.

Functionally, binds to the 50S ribosomal subunit and prevents its association with the 30S ribosomal subunit to form the 70S initiation complex. In Methanopyrus kandleri (strain AV19 / DSM 6324 / JCM 9639 / NBRC 100938), this protein is Translation initiation factor 6.